The chain runs to 417 residues: MQKLVIHGGAKLQGEISISGAKNAALPVLCASLLTADTFTIQNLPHLRDITTMLALLEQIGVRILTNDPGTAELSAASITNPTASYDMVKTMRAAILVLGPLLARTGQAYISLPGGCAIGMRPVDQHIKGLQAMGADISIEQGYIRAQAGRLSGTRIVMDLVTVTGTENLMMAATLASGTTILENAAREPEVVDLADCLIGMGAKIEGAGSDIIVIEGVDHLHGSSHTVMPDRIETGTFLTAVAACGGDITLTRTRADTLDVVLGKLIETGAAIDTGEDWIRLRMQHRPQPVSLRTAPYPAFPTDMQAQFMALNSIADGTSVMTETIFENRFMHVQELKRLNADIQVEGNTAIVHGIPQLDGASVMATDLRASACLIIAGLVAQGETIVDRIYHLDRGYERIERKLAQAGAQIKRIN.

Residue 22 to 23 (KN) participates in phosphoenolpyruvate binding. Residue Arg93 coordinates UDP-N-acetyl-alpha-D-glucosamine. Cys117 serves as the catalytic Proton donor. Residue Cys117 is modified to 2-(S-cysteinyl)pyruvic acid O-phosphothioketal. Residues 122–126 (RPVDQ), Asp305, and Ile327 contribute to the UDP-N-acetyl-alpha-D-glucosamine site.

The protein belongs to the EPSP synthase family. MurA subfamily.

The protein localises to the cytoplasm. It catalyses the reaction phosphoenolpyruvate + UDP-N-acetyl-alpha-D-glucosamine = UDP-N-acetyl-3-O-(1-carboxyvinyl)-alpha-D-glucosamine + phosphate. The protein operates within cell wall biogenesis; peptidoglycan biosynthesis. Cell wall formation. Adds enolpyruvyl to UDP-N-acetylglucosamine. The protein is UDP-N-acetylglucosamine 1-carboxyvinyltransferase of Nitrosomonas europaea (strain ATCC 19718 / CIP 103999 / KCTC 2705 / NBRC 14298).